A 268-amino-acid chain; its full sequence is Hydroxyethylthiazole kinase (268 aa).

M49 lines the substrate pocket. K124 and T168 together coordinate ATP. Substrate is bound at residue A195.

This sequence belongs to the Thz kinase family. It depends on Mg(2+) as a cofactor.

It carries out the reaction 5-(2-hydroxyethyl)-4-methylthiazole + ATP = 4-methyl-5-(2-phosphooxyethyl)-thiazole + ADP + H(+). It functions in the pathway cofactor biosynthesis; thiamine diphosphate biosynthesis; 4-methyl-5-(2-phosphoethyl)-thiazole from 5-(2-hydroxyethyl)-4-methylthiazole: step 1/1. In terms of biological role, catalyzes the phosphorylation of the hydroxyl group of 4-methyl-5-beta-hydroxyethylthiazole (THZ). This is Hydroxyethylthiazole kinase from Archaeoglobus fulgidus (strain ATCC 49558 / DSM 4304 / JCM 9628 / NBRC 100126 / VC-16).